The chain runs to 234 residues: O-antigen biosynthesis glycosyltransferase WbnI (234 aa).

Residues 8 to 13, 93 to 95, and 115 to 118 contribute to the substrate site; these read ICTGEY, NAV, and HPGY. Glutamate 185 acts as the Nucleophile in catalysis.

This sequence belongs to the glycosyltransferase 6 family. The cofactor is Mn(2+).

The enzyme catalyses alpha-L-Fuc-(1-&gt;2)-beta-D-Gal-(1-&gt;3)-alpha-D-GalNAc-(1-&gt;3)-alpha-D-GalNAc-di-trans,octa-cis-undecaprenyl diphosphate + UDP-alpha-D-galactose = alpha-L-Fuc-(1-&gt;2)-[alpha-D-Gal-(1-&gt;3)]-beta-D-Gal-(1-&gt;3)-alpha-D-GalNAc-(1-&gt;3)-alpha-D-GalNAc-di-trans,octa-cis-undecaprenyl diphosphate + UDP + H(+). Its pathway is bacterial outer membrane biogenesis; LPS O-antigen biosynthesis. Its function is as follows. Involved in the assembly of the O-repeating unit during O-antigen biosynthesis. The chain is O-antigen biosynthesis glycosyltransferase WbnI from Escherichia coli.